The primary structure comprises 552 residues: uncharacterized protein (552 aa).

The disordered stretch occupies residues 1–59 (MPLEKTNTHDSTATVEDQEATDNPMHLTQSRMLDLAGNPNRTTSRQSETLFPNGVDLNY). The segment covering 39–50 (PNRTTSRQSETL) has biased composition (polar residues). 12 helical membrane passes run 116–136 (ITIV…VIAG), 158–178 (LMVV…EMIG), 181–201 (IVYL…ALAP), 203–223 (IACL…PLTL), 238–258 (GLAI…GPLV), 271–291 (WIFW…LPVP), 345–365 (ILVC…GYFF), 383–403 (GLMF…TPFL), 424–444 (LVGM…FAWT), 450–470 (IWIG…LFYF), 484–506 (CASA…PLFI), and 519–539 (FFLL…FYLF).

It belongs to the major facilitator superfamily.

It is found in the membrane. This is an uncharacterized protein from Schizosaccharomyces pombe (strain 972 / ATCC 24843) (Fission yeast).